Reading from the N-terminus, the 949-residue chain is Glycine dehydrogenase (decarboxylating) (949 aa).

Lys-697 carries the N6-(pyridoxal phosphate)lysine modification.

The protein belongs to the GcvP family. As to quaternary structure, the glycine cleavage system is composed of four proteins: P, T, L and H. Pyridoxal 5'-phosphate is required as a cofactor.

It catalyses the reaction N(6)-[(R)-lipoyl]-L-lysyl-[glycine-cleavage complex H protein] + glycine + H(+) = N(6)-[(R)-S(8)-aminomethyldihydrolipoyl]-L-lysyl-[glycine-cleavage complex H protein] + CO2. The glycine cleavage system catalyzes the degradation of glycine. The P protein binds the alpha-amino group of glycine through its pyridoxal phosphate cofactor; CO(2) is released and the remaining methylamine moiety is then transferred to the lipoamide cofactor of the H protein. The protein is Glycine dehydrogenase (decarboxylating) of Deinococcus radiodurans (strain ATCC 13939 / DSM 20539 / JCM 16871 / CCUG 27074 / LMG 4051 / NBRC 15346 / NCIMB 9279 / VKM B-1422 / R1).